A 621-amino-acid chain; its full sequence is Chaperone protein HscA homolog (621 aa).

Belongs to the heat shock protein 70 family.

In terms of biological role, chaperone involved in the maturation of iron-sulfur cluster-containing proteins. Has a low intrinsic ATPase activity which is markedly stimulated by HscB. In Pseudomonas fluorescens (strain Pf0-1), this protein is Chaperone protein HscA homolog.